The following is a 96-amino-acid chain: Elicitor peptide 3 (96 aa).

A propeptide spanning residues 1–73 (MENLRNGEDN…EEEEEDGMTI (73 aa)) is cleaved from the precursor. The segment at 32–96 (SGLESSSSSS…PSSGKGGKHN (65 aa)) is disordered. Over residues 35–49 (ESSSSSSSSCDLSSS) the composition is skewed to low complexity. The span at 52 to 71 (EEDESIDIKEEEEEEEEDGM) shows a compositional bias: acidic residues.

Belongs to the brassicaceae elicitor peptide family.

In terms of biological role, elicitor of plant defense. The protein is Elicitor peptide 3 (PEP3) of Arabidopsis thaliana (Mouse-ear cress).